Here is a 336-residue protein sequence, read N- to C-terminus: 3-isopropylmalate dehydrogenase (336 aa).

The substrate site is built by arginine 87, arginine 97, arginine 121, and aspartate 211. The Mg(2+) site is built by aspartate 211, aspartate 235, and aspartate 239. NAD(+) is bound at residue 271 to 283 (GSAPDIAGQGIAD).

The protein belongs to the isocitrate and isopropylmalate dehydrogenases family. LeuB type 2 subfamily. As to quaternary structure, homodimer. Mg(2+) serves as cofactor. The cofactor is Mn(2+).

Its subcellular location is the cytoplasm. The catalysed reaction is (2R,3S)-3-isopropylmalate + NAD(+) = 4-methyl-2-oxopentanoate + CO2 + NADH. It functions in the pathway amino-acid biosynthesis; L-leucine biosynthesis; L-leucine from 3-methyl-2-oxobutanoate: step 3/4. In terms of biological role, catalyzes the oxidation of 3-carboxy-2-hydroxy-4-methylpentanoate (3-isopropylmalate) to 3-carboxy-4-methyl-2-oxopentanoate. The product decarboxylates to 4-methyl-2 oxopentanoate. This is 3-isopropylmalate dehydrogenase from Mycobacterium bovis (strain ATCC BAA-935 / AF2122/97).